A 240-amino-acid polypeptide reads, in one-letter code: UDP-2,3-diacylglucosamine hydrolase (240 aa).

Residues D8, H10, D41, N79, and H114 each coordinate Mn(2+). Residue N79–R80 coordinates substrate. Substrate is bound by residues D122, S160, N164, K167, and H195. Mn(2+) is bound by residues H195 and H197.

It belongs to the LpxH family. The cofactor is Mn(2+).

Its subcellular location is the cell inner membrane. It catalyses the reaction UDP-2-N,3-O-bis[(3R)-3-hydroxytetradecanoyl]-alpha-D-glucosamine + H2O = 2-N,3-O-bis[(3R)-3-hydroxytetradecanoyl]-alpha-D-glucosaminyl 1-phosphate + UMP + 2 H(+). Its pathway is glycolipid biosynthesis; lipid IV(A) biosynthesis; lipid IV(A) from (3R)-3-hydroxytetradecanoyl-[acyl-carrier-protein] and UDP-N-acetyl-alpha-D-glucosamine: step 4/6. In terms of biological role, hydrolyzes the pyrophosphate bond of UDP-2,3-diacylglucosamine to yield 2,3-diacylglucosamine 1-phosphate (lipid X) and UMP by catalyzing the attack of water at the alpha-P atom. Involved in the biosynthesis of lipid A, a phosphorylated glycolipid that anchors the lipopolysaccharide to the outer membrane of the cell. This is UDP-2,3-diacylglucosamine hydrolase from Escherichia coli (strain SE11).